A 257-amino-acid polypeptide reads, in one-letter code: UPF0246 protein Shal_1126 (257 aa).

This sequence belongs to the UPF0246 family.

The protein is UPF0246 protein Shal_1126 of Shewanella halifaxensis (strain HAW-EB4).